A 288-amino-acid chain; its full sequence is Rhox homeobox family member 2 (288 aa).

A disordered region spans residues 16 to 136; the sequence is SPAVDDEKEL…GLEPGNAQQP (121 aa). Acidic residues predominate over residues 39-48; sequence VKEEEEDAQP. The segment covering 68 to 80 has biased composition (basic and acidic residues); that stretch reads GEEKDGGGEEKDG. The segment at residues 134–193 is a DNA-binding region (homeobox); that stretch reads QQPNVHAFTPLQLQELERIFQREQFPSEFLRRRLARSMNVTELAVQIWFENRRAKWRRHQ. Residues 186–195 carry the Nuclear localization signal motif; the sequence is RAKWRRHQRA.

This sequence belongs to the paired-like homeobox family. PEPP subfamily. As to expression, testis. Not detected in epididymis nor placenta. In testis, mainly expressed in germ cells, but also detected in somatic cells such as Sertoli cells, Leydig cells and peritubular cells.

Its subcellular location is the nucleus. Functionally, transcription factor maybe involved in reproductive processes. Modulates expression of target genes encoding proteins involved in processes relevant to spermatogenesis. In Homo sapiens (Human), this protein is Rhox homeobox family member 2.